A 478-amino-acid polypeptide reads, in one-letter code: Protein nucleotidyltransferase YdiU (478 aa).

ATP contacts are provided by G84, G86, R87, K107, D119, G120, R170, and R177. D246 acts as the Proton acceptor in catalysis. 2 residues coordinate Mg(2+): N247 and D256. ATP is bound at residue D256.

It belongs to the SELO family. Mg(2+) is required as a cofactor. Requires Mn(2+) as cofactor.

It carries out the reaction L-seryl-[protein] + ATP = 3-O-(5'-adenylyl)-L-seryl-[protein] + diphosphate. It catalyses the reaction L-threonyl-[protein] + ATP = 3-O-(5'-adenylyl)-L-threonyl-[protein] + diphosphate. The catalysed reaction is L-tyrosyl-[protein] + ATP = O-(5'-adenylyl)-L-tyrosyl-[protein] + diphosphate. The enzyme catalyses L-histidyl-[protein] + UTP = N(tele)-(5'-uridylyl)-L-histidyl-[protein] + diphosphate. It carries out the reaction L-seryl-[protein] + UTP = O-(5'-uridylyl)-L-seryl-[protein] + diphosphate. It catalyses the reaction L-tyrosyl-[protein] + UTP = O-(5'-uridylyl)-L-tyrosyl-[protein] + diphosphate. Nucleotidyltransferase involved in the post-translational modification of proteins. It can catalyze the addition of adenosine monophosphate (AMP) or uridine monophosphate (UMP) to a protein, resulting in modifications known as AMPylation and UMPylation. In Escherichia coli O81 (strain ED1a), this protein is Protein nucleotidyltransferase YdiU.